The chain runs to 642 residues: Zinc finger protein 14 (642 aa).

A KRAB domain is found at 4–76; sequence VSFEDVAVNF…MVERLCESRK (73 aa). The segment at 103–125 adopts a C2H2-type 1 zinc-finger fold; the sequence is HECSFCGRDFMHHSSLNRHMRSH. A C2H2-type 2; degenerate zinc finger spans residues 141–163; it reads RKHKAVEKTFSYHHCFRKHERTH. The C2H2-type 3 zinc finger occupies 169-191; it reads YECKQCGKAFIYYQPFQRHERTH. Residues 197–217 form a C2H2-type 4; atypical zinc finger; that stretch reads YECKQCGKTFIYYQSFQQHAH. C2H2-type zinc fingers lie at residues 223–245, 251–273, 279–301, 307–329, 335–357, 363–385, 391–413, 419–441, 447–469, 475–497, 503–525, 531–553, 559–581, 587–609, and 615–637; these read YECKQCGKAFICYQSFQRHERTH, YECKQCGKAFSCPTYFRTHERTH, YKCKECGKAFSFLSSFRRHKRTH, YECKECGKAFFYSASFRAHVITH, YKCKECGKAFNSSNSCRVHERTH, YECKQCGKSFSWSISLRLHERTH, YECKQCHKTFSFSSSLREHETTH, YECKQCGKTFSFSSSLQRHERTH, YECKQCGKAFRCSSYFRIHERSH, YECKQCGKVFIRSSSFRLHERTH, YECKLCSKTFSFSSSLREHEKIH, FECKQCGKAFLRSSQIRLHERTH, YQCKQCGKAFISSSKFRMHERTH, YRCKQCGKAFRFSSSVRIHERSH, and YECKQCGKAFISSSHFRLHERTH.

Belongs to the krueppel C2H2-type zinc-finger protein family.

It is found in the nucleus. May be involved in transcriptional regulation. The sequence is that of Zinc finger protein 14 (ZNF14) from Pongo abelii (Sumatran orangutan).